The sequence spans 312 residues: Malate dehydrogenase (312 aa).

Residues 7 to 13 and D34 contribute to the NAD(+) site; that span reads GAAGGIG. Substrate contacts are provided by R81 and R87. NAD(+) is bound by residues N94 and 117–119; that span reads ITN. Substrate contacts are provided by N119 and R153. The Proton acceptor role is filled by H177. M227 lines the NAD(+) pocket.

This sequence belongs to the LDH/MDH superfamily. MDH type 1 family. As to quaternary structure, homodimer.

It carries out the reaction (S)-malate + NAD(+) = oxaloacetate + NADH + H(+). Functionally, catalyzes the reversible oxidation of malate to oxaloacetate. This chain is Malate dehydrogenase, found in Escherichia coli (strain ATCC 8739 / DSM 1576 / NBRC 3972 / NCIMB 8545 / WDCM 00012 / Crooks).